We begin with the raw amino-acid sequence, 445 residues long: Gamma-glutamyl phosphate reductase (445 aa).

It belongs to the gamma-glutamyl phosphate reductase family.

The protein resides in the cytoplasm. The catalysed reaction is L-glutamate 5-semialdehyde + phosphate + NADP(+) = L-glutamyl 5-phosphate + NADPH + H(+). The protein operates within amino-acid biosynthesis; L-proline biosynthesis; L-glutamate 5-semialdehyde from L-glutamate: step 2/2. Its function is as follows. Catalyzes the NADPH-dependent reduction of L-glutamate 5-phosphate into L-glutamate 5-semialdehyde and phosphate. The product spontaneously undergoes cyclization to form 1-pyrroline-5-carboxylate. This chain is Gamma-glutamyl phosphate reductase, found in Saccharopolyspora erythraea (strain ATCC 11635 / DSM 40517 / JCM 4748 / NBRC 13426 / NCIMB 8594 / NRRL 2338).